We begin with the raw amino-acid sequence, 193 residues long: uncharacterized protein (193 aa).

3 disordered regions span residues 1-21 (MPKG…APPL), 53-96 (GAPA…PWPS), and 114-136 (SGPE…ASAS). The span at 53-70 (GAPAGGAPAAGGRSLPQG) shows a compositional bias: low complexity. The span at 71-95 (PSAPAPPPPPGLGPPSERPCPPPWP) shows a compositional bias: pro residues. Residues 116–127 (PEAAASPLAPGP) show a composition bias toward low complexity.

This is an uncharacterized protein from Bos taurus (Bovine).